The sequence spans 864 residues: DNA mismatch repair protein MutS (864 aa).

Position 621 to 628 (621 to 628) interacts with ATP; the sequence is GPNMGGKS. Residues 804–833 are disordered; sequence ETGKPESPAPVASRSSKPSMQADMFAEPQP.

It belongs to the DNA mismatch repair MutS family.

This protein is involved in the repair of mismatches in DNA. It is possible that it carries out the mismatch recognition step. This protein has a weak ATPase activity. In Teredinibacter turnerae (strain ATCC 39867 / T7901), this protein is DNA mismatch repair protein MutS.